The following is a 674-amino-acid chain: CLK4-associating serine/arginine rich protein (674 aa).

S101 is modified (phosphoserine). Disordered regions lie at residues 171–232 (TVAE…GMAD) and 258–674 (EKAM…HYRH). Residues 182–214 (PEEEESAAEEESNSDEDEVIPDIDVEVDVDELN) show a composition bias toward acidic residues. Basic residues predominate over residues 265 to 283 (RRSRRQRREFREKRLRGRK). 2 positions are modified to phosphoserine: S285 and S294. Basic and acidic residues predominate over residues 290–313 (ARRDSPTYDPYKRSPSESSSESRS). Phosphothreonine is present on T327. Residues S331 and S335 each carry the phosphoserine modification. Pro residues predominate over residues 356-365 (PPAPPQPGGP). The span at 378-399 (SSSSSSSSASRTSSSRSSSRSS) shows a compositional bias: low complexity. Basic residues-rich tracts occupy residues 411–443 (SGRH…RRHS) and 481–492 (RGGRGLRHHSSS). 2 stretches are compositionally biased toward low complexity: residues 493-506 (RSRS…SRSR) and 514-532 (HSPS…SQSP). A Phosphoserine modification is found at S547. T573 bears the Phosphothreonine mark. Residues 585–647 (ALNRQFKADK…ERQYSRQSRS (63 aa)) are a coiled coil. Composition is skewed to basic and acidic residues over residues 590–617 (FKAD…ELRA) and 625–641 (KERE…ERQY). The span at 642-651 (SRQSRSPSPR) shows a compositional bias: low complexity. Residues 659-674 (SRRRSRSRSRSPHYRH) are compositionally biased toward basic residues.

It belongs to the splicing factor SR family. Probably interacts with CLK4. Post-translationally, phosphorylated in vitro by CLK4.

The protein resides in the nucleus. Functionally, probably functions as an alternative splicing regulator. May regulate the mRNA splicing of genes such as CLK1. May act by regulating members of the CLK kinase family. The chain is CLK4-associating serine/arginine rich protein (CLASRP) from Homo sapiens (Human).